The chain runs to 614 residues: 1-deoxy-D-xylulose-5-phosphate synthase (614 aa).

Thiamine diphosphate-binding positions include His74 and 115–117 (AHS). Position 146 (Asp146) interacts with Mg(2+). Thiamine diphosphate contacts are provided by residues 147–148 (GA), Asn175, Tyr282, and Glu363. Residue Asn175 coordinates Mg(2+).

Belongs to the transketolase family. DXPS subfamily. In terms of assembly, homodimer. The cofactor is Mg(2+). Requires thiamine diphosphate as cofactor.

The enzyme catalyses D-glyceraldehyde 3-phosphate + pyruvate + H(+) = 1-deoxy-D-xylulose 5-phosphate + CO2. It participates in metabolic intermediate biosynthesis; 1-deoxy-D-xylulose 5-phosphate biosynthesis; 1-deoxy-D-xylulose 5-phosphate from D-glyceraldehyde 3-phosphate and pyruvate: step 1/1. Functionally, catalyzes the acyloin condensation reaction between C atoms 2 and 3 of pyruvate and glyceraldehyde 3-phosphate to yield 1-deoxy-D-xylulose-5-phosphate (DXP). The protein is 1-deoxy-D-xylulose-5-phosphate synthase of Nitrosomonas eutropha (strain DSM 101675 / C91 / Nm57).